We begin with the raw amino-acid sequence, 109 residues long: Spermidine export protein MdtI (109 aa).

The next 4 membrane-spanning stretches (helical) occupy residues 6–26, 36–56, 64–84, and 88–108; these read WIHA…NVFL, WFGL…SQAV, AYAL…WVLF, and LNRK…MIKL.

This sequence belongs to the drug/metabolite transporter (DMT) superfamily. Small multidrug resistance (SMR) (TC 2.A.7.1) family. MdtI subfamily. In terms of assembly, forms a complex with MdtJ.

It is found in the cell inner membrane. Functionally, catalyzes the excretion of spermidine. The sequence is that of Spermidine export protein MdtI from Enterobacter sp. (strain 638).